The primary structure comprises 154 residues: Movement protein (154 aa).

Disordered stretches follow at residues 83-103 (SSPT…HTRP) and 123-154 (WVAT…GRVR).

It belongs to the luteoviruses movement protein family.

Functionally, transports viral genome to neighboring plant cells directly through plasmosdesmata, without any budding. The movement protein allows efficient cell to cell propagation, by bypassing the host cell wall barrier. This chain is Movement protein, found in Barley yellow dwarf virus (isolate MAV) (BYDV).